The following is a 114-amino-acid chain: TYRO protein tyrosine kinase-binding protein (114 aa).

The first 27 residues, 1–27, serve as a signal peptide directing secretion; that stretch reads MGAPEPSWCFLFLPVLLTVGGLSPVQA. The Extracellular segment spans residues 28–42; that stretch reads QSDNYPGCECSSVSP. Residues 43–63 traverse the membrane as a helical segment; sequence GVLAGIVLGDLVLTLLIALAV. Residue D52 coordinates Ca(2+). At 64 to 114 the chain is on the cytoplasmic side; it reads YSLGRLVSRGRGTADGTRKQHMAETESPYQELQGQRPEVYSDLNTQRQYYR. The tract at residues 72 to 114 is disordered; sequence RGRGTADGTRKQHMAETESPYQELQGQRPEVYSDLNTQRQYYR. Residues 81–109 enclose the ITAM domain; it reads RKQHMAETESPYQELQGQRPEVYSDLNTQ. Y92 and Y103 each carry phosphotyrosine. The span at 105–114 shows a compositional bias: polar residues; sequence DLNTQRQYYR.

The protein belongs to the TYROBP family. Homodimer; disulfide-linked. Homotrimer; disulfide-linked. Homotetramer; disulfide-linked. Homotrimers and homotetramers form when low levels of partner receptors are available and is competitive with assembly with interacting receptors. They may represent alternative oligomerization states or may be intermediates in the receptor assembly process. Binding of a metal cation aids in homooligomerization through coordination of the metal ion by the subunits of the oligomer. Interacts with TREM1. Interacts with TREM2. Interacts with CLECSF5. Interacts with CD300LB and CD300C2. Interacts with CD300E. Interacts (via ITAM domain) with SYK (via SH2 domains); activates SYK mediating neutrophils and macrophages integrin-mediated activation. Interacts with KLRC2. Interacts with CD300H. Interacts with KLRD1. Interacts with SIGLEC1. Following ligand binding by associated receptors, tyrosine phosphorylated in the ITAM domain which leads to activation of additional tyrosine kinases and subsequent cell activation.

The protein resides in the cell membrane. Functionally, adapter protein which non-covalently associates with activating receptors found on the surface of a variety of immune cells to mediate signaling and cell activation following ligand binding by the receptors. TYROBP is tyrosine-phosphorylated in the ITAM domain following ligand binding by the associated receptors which leads to activation of additional tyrosine kinases and subsequent cell activation. Also has an inhibitory role in some cells. Non-covalently associates with activating receptors of the CD300 family to mediate cell activation. Also mediates cell activation through association with activating receptors of the CD200R family. Required for neutrophil activation mediated by integrin. Required for the activation of myeloid cells mediated by the CLEC5A/MDL1 receptor. Associates with natural killer (NK) cell receptors such as the KLRD1/KLRC2 heterodimer to mediate NK cell activation. Associates with TREM1 to mediate activation of neutrophils and monocytes. Associates with TREM2 on monocyte-derived dendritic cells to mediate up-regulation of chemokine receptor CCR7 and dendritic cell maturation and survival. PAssociation with TREM2 mediates cytokine-induced formation of multinucleated giant cells which are formed by the fusion of macrophages. Stabilizes the TREM2 C-terminal fragment (TREM2-CTF) produced by TREM2 ectodomain shedding which suppresses the release of pro-inflammatory cytokines. In microglia, required with TREM2 for phagocytosis of apoptotic neurons. Required with ITGAM/CD11B in microglia to control production of microglial superoxide ions which promote the neuronal apoptosis that occurs during brain development. Promotes pro-inflammatory responses in microglia following nerve injury which accelerates degeneration of injured neurons. ositively regulates the expression of the IRAK3/IRAK-M kinase and IL10 production by liver dendritic cells and inhibits their T cell allosimulatory ability. Negatively regulates B cell proliferation. Required for CSF1-mediated osteoclast cytoskeletal organization. Positively regulates multinucleation during osteoclast development. The sequence is that of TYRO protein tyrosine kinase-binding protein from Rattus norvegicus (Rat).